Consider the following 1960-residue polypeptide: Intraflagellar transport protein 172 (1960 aa).

2 WD repeats span residues 63–103 and 328–367; these read SNKD…TDKK and GFLP…YRYC. TPR repeat units follow at residues 1064–1098, 1362–1395, and 1397–1428; these read KADQ…QSYR, CDLF…QEIV, and MYLD…RSIR.

This sequence belongs to the IFT172 family.

The protein resides in the cell projection. It localises to the cilium. Its subcellular location is the flagellum. It is found in the cytoplasm. The protein localises to the cytoskeleton. The protein resides in the flagellum axoneme. It localises to the flagellum basal body. Component of the intraflagellar transport complex B (IFT-B) involved in flagellar assembly. The sequence is that of Intraflagellar transport protein 172 from Giardia intestinalis (strain ATCC 50803 / WB clone C6) (Giardia lamblia).